A 292-amino-acid polypeptide reads, in one-letter code: F-box only protein 16 (292 aa).

In terms of domain architecture, F-box spans 86 to 132; that stretch reads LDFTTKLPRVLSLYIFSFLDPRSLCRCAQVCWHWKNLAELDQLWMLK. 2 disordered regions span residues 188-224 and 238-292; these read SPEE…SSDK and RDPM…PLCP. Low complexity predominate over residues 194-204; sequence SPLSAFRSSSS. Basic and acidic residues predominate over residues 260-273; that stretch reads RQSHDKKNKLQDRT.

As to quaternary structure, part of a SCF (SKP1-cullin-F-box) protein ligase complex. Expressed in heart, spleen and colon.

In terms of biological role, probably recognizes and binds to some phosphorylated proteins and promotes their ubiquitination and degradation. This is F-box only protein 16 (FBXO16) from Homo sapiens (Human).